Reading from the N-terminus, the 475-residue chain is Dihydrolipoyl dehydrogenase (475 aa).

Residues 36-45 (ERYSTLGGVC), lysine 54, and glycine 117 each bind FAD. Cysteine 45 and cysteine 50 are oxidised to a cystine. NAD(+) contacts are provided by residues 182 to 186 (GGGII), glutamate 205, valine 238, and 270 to 273 (AIGR). FAD contacts are provided by aspartate 313 and alanine 321. The active-site Proton acceptor is histidine 445.

This sequence belongs to the class-I pyridine nucleotide-disulfide oxidoreductase family. The cofactor is FAD.

It is found in the cytoplasm. The catalysed reaction is N(6)-[(R)-dihydrolipoyl]-L-lysyl-[protein] + NAD(+) = N(6)-[(R)-lipoyl]-L-lysyl-[protein] + NADH + H(+). Functionally, the branched-chain alpha-keto dehydrogenase complex catalyzes the overall conversion of alpha-keto acids to acyl-CoA and CO(2). It contains multiple copies of 3 enzymatic components: branched-chain alpha-keto acid decarboxylase (E1), lipoamide acyltransferase (E2) and lipoamide dehydrogenase (E3). This Vibrio parahaemolyticus serotype O3:K6 (strain RIMD 2210633) protein is Dihydrolipoyl dehydrogenase (lpd).